Consider the following 435-residue polypeptide: NADH-quinone oxidoreductase subunit D (435 aa).

It belongs to the complex I 49 kDa subunit family. In terms of assembly, NDH-1 is composed of 14 different subunits. Subunits NuoB, C, D, E, F, and G constitute the peripheral sector of the complex.

It is found in the cell inner membrane. It carries out the reaction a quinone + NADH + 5 H(+)(in) = a quinol + NAD(+) + 4 H(+)(out). In terms of biological role, NDH-1 shuttles electrons from NADH, via FMN and iron-sulfur (Fe-S) centers, to quinones in the respiratory chain. The immediate electron acceptor for the enzyme in this species is believed to be ubiquinone. Couples the redox reaction to proton translocation (for every two electrons transferred, four hydrogen ions are translocated across the cytoplasmic membrane), and thus conserves the redox energy in a proton gradient. The chain is NADH-quinone oxidoreductase subunit D from Xanthomonas campestris pv. campestris (strain 8004).